We begin with the raw amino-acid sequence, 105 residues long: UPF0145 protein CCNA_02462 (105 aa).

This sequence belongs to the UPF0145 family.

The chain is UPF0145 protein CCNA_02462 from Caulobacter vibrioides (strain NA1000 / CB15N) (Caulobacter crescentus).